An 836-amino-acid chain; its full sequence is Protein-glutamine gamma-glutamyltransferase K (836 aa).

Residues 1–33 are compositionally biased toward basic and acidic residues; that stretch reads MDGPRSDMGRSDVSRSDMSRSDMGRSDMGRSDV. Disordered regions lie at residues 1 to 68 and 89 to 125; these read MDGP…SRGG and DDWG…DGTI. Threonine 46 bears the Phosphothreonine mark. A phosphoserine mark is found at serine 48, serine 98, and serine 112. The span at 89 to 112 shows a compositional bias: basic and acidic residues; the sequence is DDWGREPSDSRDRGSSSRGGRPDS. Active-site residues include cysteine 397, histidine 456, and aspartate 479. Residues asparagine 519, aspartate 521, glutamate 568, and glutamate 573 each contribute to the Ca(2+) site. Phosphoserine is present on serine 824.

Belongs to the transglutaminase superfamily. Transglutaminase family. Interacts with PLAAT4. The cofactor is Ca(2+). Post-translationally, palmitoylated. The membrane anchorage region possesses a cluster of five cysteines within which fatty acid(s) may become thioester-linked. It is subject to phorbol ester-stimulated phosphorylation and is hypersensitive to proteolysis, which releases the enzyme in a soluble form. In terms of processing, tyrosine-phosphorylated.

The protein resides in the membrane. It carries out the reaction L-glutaminyl-[protein] + L-lysyl-[protein] = [protein]-L-lysyl-N(6)-5-L-glutamyl-[protein] + NH4(+). With respect to regulation, inhibited by retinoic acid, but phorbol ester treatment activates it. Its function is as follows. Catalyzes the cross-linking of proteins and the conjugation of polyamines to proteins. Responsible for cross-linking epidermal proteins during formation of the stratum corneum. Involved in cell proliferation. The polypeptide is Protein-glutamine gamma-glutamyltransferase K (TGM1) (Oryctolagus cuniculus (Rabbit)).